A 429-amino-acid chain; its full sequence is Histidinol dehydrogenase (429 aa).

Residues Y130, Q191, and N214 each coordinate NAD(+). The substrate site is built by S237, Q259, and H262. Zn(2+)-binding residues include Q259 and H262. Residues E327 and H328 each act as proton acceptor in the active site. H328, D361, E415, and H420 together coordinate substrate. D361 serves as a coordination point for Zn(2+). H420 contributes to the Zn(2+) binding site.

Belongs to the histidinol dehydrogenase family. Requires Zn(2+) as cofactor.

It catalyses the reaction L-histidinol + 2 NAD(+) + H2O = L-histidine + 2 NADH + 3 H(+). It functions in the pathway amino-acid biosynthesis; L-histidine biosynthesis; L-histidine from 5-phospho-alpha-D-ribose 1-diphosphate: step 9/9. In terms of biological role, catalyzes the sequential NAD-dependent oxidations of L-histidinol to L-histidinaldehyde and then to L-histidine. In Geobacter sulfurreducens (strain ATCC 51573 / DSM 12127 / PCA), this protein is Histidinol dehydrogenase.